The chain runs to 729 residues: Rab-like protein 6 (729 aa).

Position 1 is an N-acetylmethionine (M1). The small GTPase-like stretch occupies residues 39–279 (GVQYNMKIVI…IFLEMMEARS (241 aa)). Residues 50 to 57 (GDRNTGKT), 100 to 104 (DVVDK), and 177 to 179 (YRD) each bind GTP. The interval 281 to 729 (GHASPLAANG…HPGGGDYEEL (449 aa)) is disordered. Residues 290–315 (GQSPSPGSQSPVVPAGAVSTGSSSPG) show a composition bias toward low complexity. A compositionally biased stretch (pro residues) spans 331–351 (SSVPPVPPSEALPPPACPSAP). Residues 395–416 (PDDRLDRSFLEDTTPARDEKKV) show a composition bias toward basic and acidic residues. Phosphoserine occurs at positions 402, 425, 427, 470, 471, 492, 525, and 577. Positions 489–502 (QQCSEPETKWSSIP) are enriched in polar residues. Residues 581–595 (DTQRRADDFPVRDDP) are compositionally biased toward basic and acidic residues. S596 is modified (phosphoserine). Acidic residues predominate over residues 596–605 (SDVTDEDEGP). T599 carries the post-translational modification Phosphothreonine. The span at 606 to 615 (AEPPPPPKLP) shows a compositional bias: pro residues. Basic and acidic residues predominate over residues 635 to 652 (AGPKESSEEGKEGKTPSK). Residues S640 and S641 each carry the phosphoserine modification. Residues 655–693 (KKKKKKGKEEEEKAAKKKSKHKKSKDKEEGKEERRRRQQ) form an interaction with CDKN2A region. The span at 669 to 678 (AKKKSKHKKS) shows a compositional bias: basic residues. Residues 679–689 (KDKEEGKEERR) show a composition bias toward basic and acidic residues. Gly residues predominate over residues 711–729 (LGGGAPGGRHPGGGDYEEL).

It belongs to the small GTPase superfamily. Rab family. Post-translationally, isoform 1 is O-glycosylated, while other isoforms are not.

It localises to the cytoplasm. Its subcellular location is the nucleus. Functionally, may enhance cellular proliferation. May reduce growth inhibitory activity of CDKN2A. The chain is Rab-like protein 6 (RABL6) from Homo sapiens (Human).